The chain runs to 246 residues: Probable transcriptional regulatory protein CLD_1467 (246 aa).

This sequence belongs to the TACO1 family.

The protein localises to the cytoplasm. The chain is Probable transcriptional regulatory protein CLD_1467 from Clostridium botulinum (strain Okra / Type B1).